The chain runs to 279 residues: Large ribosomal subunit protein uL2 (279 aa).

Residues 222-279 (GVAMNPVDHPHGGGEGRTSGGRHPVTPAGKPTKGAKTRVNKATDKFIIRSRHKAKKGR) form a disordered region. Residues 269-279 (IRSRHKAKKGR) are compositionally biased toward basic residues.

The protein belongs to the universal ribosomal protein uL2 family. Part of the 50S ribosomal subunit. Forms a bridge to the 30S subunit in the 70S ribosome.

In terms of biological role, one of the primary rRNA binding proteins. Required for association of the 30S and 50S subunits to form the 70S ribosome, for tRNA binding and peptide bond formation. It has been suggested to have peptidyltransferase activity; this is somewhat controversial. Makes several contacts with the 16S rRNA in the 70S ribosome. The sequence is that of Large ribosomal subunit protein uL2 from Caulobacter vibrioides (strain ATCC 19089 / CIP 103742 / CB 15) (Caulobacter crescentus).